A 923-amino-acid chain; its full sequence is ATP-dependent Clp protease ATP-binding subunit ClpA homolog CD4B, chloroplastic (923 aa).

The 143-residue stretch at 92-234 (FERFTEKAIK…RTQVIRMVGE (143 aa)) folds into the Clp R domain. 2 repeat regions span residues 95 to 160 (FTEK…IGRG) and 170 to 234 (FTPR…MVGE). An i region spans residues 255–502 (LEEYGTNLTK…RVRLRHAQLP (248 aa)). Residue 300 to 307 (GEPGVGKT) participates in ATP binding. The UVR domain occupies 509–544 (EKELRQITKEKNEAVRGQDFEKAGELRDREMDLKAQ). The II stretch occupies residues 569-760 (VTEADIQHIV…LLIMTSNVGS (192 aa)). Residue 643 to 650 (GPTGVGKS) coordinates ATP.

This sequence belongs to the ClpA/ClpB family.

It is found in the plastid. The protein localises to the chloroplast. In terms of biological role, may interact with a ClpP-like protease involved in degradation of denatured proteins in the chloroplast. The sequence is that of ATP-dependent Clp protease ATP-binding subunit ClpA homolog CD4B, chloroplastic (CD4B) from Solanum lycopersicum (Tomato).